A 365-amino-acid polypeptide reads, in one-letter code: tRNA-specific 2-thiouridylase MnmA (365 aa).

Residues 14–21 (AMSGGVDS) and Leu-40 each bind ATP. The active-site Nucleophile is Cys-108. A disulfide bridge links Cys-108 with Cys-204. Gly-132 contributes to the ATP binding site. Residues 154 to 156 (KDQ) are interaction with tRNA. Cys-204 functions as the Cysteine persulfide intermediate in the catalytic mechanism.

It belongs to the MnmA/TRMU family.

It is found in the cytoplasm. The catalysed reaction is S-sulfanyl-L-cysteinyl-[protein] + uridine(34) in tRNA + AH2 + ATP = 2-thiouridine(34) in tRNA + L-cysteinyl-[protein] + A + AMP + diphosphate + H(+). Functionally, catalyzes the 2-thiolation of uridine at the wobble position (U34) of tRNA, leading to the formation of s(2)U34. The sequence is that of tRNA-specific 2-thiouridylase MnmA from Rickettsia akari (strain Hartford).